We begin with the raw amino-acid sequence, 64 residues long: Conotoxin Pu3.4 (64 aa).

The signal sequence occupies residues 1 to 16; the sequence is LGVLLPICLLLFPLTA. Positions 17-49 are excised as a propeptide; the sequence is LPLDGDQPADRPAERMQDDFITEQHPLFDPVKR. 3 cysteine pairs are disulfide-bonded: Cys50/Cys63, Cys51/Cys59, and Cys55/Cys62. Pro61 is modified (4-hydroxyproline).

It belongs to the conotoxin M superfamily. As to expression, expressed by the venom duct.

It localises to the secreted. This Conus pulicarius (Flea-bitten cone) protein is Conotoxin Pu3.4.